A 60-amino-acid polypeptide reads, in one-letter code: Metallothionein B (60 aa).

The tract at residues 1 to 28 (MDPCECSKTGSCNCGGSCKCSNCACTSC) is beta. A divalent metal cation-binding residues include Cys4, Cys6, Cys12, Cys14, Cys18, Cys20, Cys23, Cys25, Cys28, Cys32, Cys33, Cys35, Cys36, Cys40, Cys43, Cys47, Cys49, Cys54, Cys58, and Cys59. Residues 29–60 (KKSCCPCCPSDCSKCASGCVCKGKTCDTSCCQ) are alpha.

Belongs to the metallothionein superfamily. Type 1 family.

Functionally, metallothioneins have a high content of cysteine residues that bind various heavy metals. This is Metallothionein B (mtb) from Oncorhynchus mykiss (Rainbow trout).